Consider the following 139-residue polypeptide: Trafficking protein particle complex subunit 2-like protein (139 aa).

It belongs to the TRAPP small subunits family. Sedlin subfamily.

It localises to the cytoplasm. It is found in the perinuclear region. Its subcellular location is the endoplasmic reticulum. The protein resides in the golgi apparatus. In terms of biological role, may play a role in vesicular transport from endoplasmic reticulum to Golgi. This Xenopus tropicalis (Western clawed frog) protein is Trafficking protein particle complex subunit 2-like protein (trappc2l).